Here is a 348-residue protein sequence, read N- to C-terminus: Large ribosomal subunit protein uL3m (348 aa).

The N-terminal 40 residues, 1–40 (MPGWRLLAQAGARVLGCGARGLGADPGLERRKNILFFVRN), are a transit peptide targeting the mitochondrion.

It belongs to the universal ribosomal protein uL3 family. In terms of assembly, component of the mitochondrial ribosome large subunit (39S) which comprises a 16S rRNA and about 50 distinct proteins.

The protein localises to the mitochondrion. The chain is Large ribosomal subunit protein uL3m (Mrpl3) from Mus musculus (Mouse).